Consider the following 1588-residue polypeptide: Pentafunctional AROM polypeptide (1588 aa).

Positions 1 to 392 (MVQLAKVPIL…YGDSAQFVSD (392 aa)) are 3-dehydroquinate synthase. NAD(+) is bound by residues 43 to 45 (DTN), 78 to 81 (ETSK), 109 to 111 (GGV), and Asp114. Arg125 lines the 7-phospho-2-dehydro-3-deoxy-D-arabino-heptonate pocket. 134-135 (TS) serves as a coordination point for NAD(+). 7-phospho-2-dehydro-3-deoxy-D-arabino-heptonate is bound by residues Asp141 and Lys147. Lys156 contacts NAD(+). Asn157 contributes to the 7-phospho-2-dehydro-3-deoxy-D-arabino-heptonate binding site. NAD(+) contacts are provided by residues 174–177 (WLET) and Asn185. Zn(2+) is bound at residue Glu189. 7-phospho-2-dehydro-3-deoxy-D-arabino-heptonate contacts are provided by residues 189 to 192 (EVIK) and Lys258. Glu268 serves as the catalytic Proton acceptor; for 3-dehydroquinate synthase activity. 7-phospho-2-dehydro-3-deoxy-D-arabino-heptonate-binding positions include 272 to 276 (RNLLN) and His279. His279 serves as a coordination point for Zn(2+). His283 acts as the Proton acceptor; for 3-dehydroquinate synthase activity in catalysis. His295 and Lys364 together coordinate 7-phospho-2-dehydro-3-deoxy-D-arabino-heptonate. A Zn(2+)-binding site is contributed by His295. The tract at residues 405-871 (VYPFKDIPAD…WDVLHSELGA (467 aa)) is EPSP synthase. Cys853 serves as the catalytic For EPSP synthase activity. The shikimate kinase stretch occupies residues 890–1080 (SVVIIGMRAA…IPSGRSAFVC (191 aa)). 895 to 902 (GMRAAGKT) lines the ATP pocket. Residues 1081–1293 (LTFDDLTEQT…AAPGQLTVAQ (213 aa)) are 3-dehydroquinase. His1198 (proton acceptor; for 3-dehydroquinate dehydratase activity) is an active-site residue. Lys1227 functions as the Schiff-base intermediate with substrate; for 3-dehydroquinate dehydratase activity in the catalytic mechanism. Positions 1306-1588 (PKELFVVGKP…KAIFDAVTKE (283 aa)) are shikimate dehydrogenase.

This sequence in the N-terminal section; belongs to the sugar phosphate cyclases superfamily. Dehydroquinate synthase family. In the 2nd section; belongs to the EPSP synthase family. The protein in the 3rd section; belongs to the shikimate kinase family. It in the 4th section; belongs to the type-I 3-dehydroquinase family. This sequence in the C-terminal section; belongs to the shikimate dehydrogenase family. As to quaternary structure, homodimer. Zn(2+) serves as cofactor.

The protein localises to the cytoplasm. It catalyses the reaction 7-phospho-2-dehydro-3-deoxy-D-arabino-heptonate = 3-dehydroquinate + phosphate. It carries out the reaction 3-dehydroquinate = 3-dehydroshikimate + H2O. The enzyme catalyses shikimate + NADP(+) = 3-dehydroshikimate + NADPH + H(+). The catalysed reaction is shikimate + ATP = 3-phosphoshikimate + ADP + H(+). It catalyses the reaction 3-phosphoshikimate + phosphoenolpyruvate = 5-O-(1-carboxyvinyl)-3-phosphoshikimate + phosphate. It participates in metabolic intermediate biosynthesis; chorismate biosynthesis; chorismate from D-erythrose 4-phosphate and phosphoenolpyruvate: step 2/7. It functions in the pathway metabolic intermediate biosynthesis; chorismate biosynthesis; chorismate from D-erythrose 4-phosphate and phosphoenolpyruvate: step 3/7. Its pathway is metabolic intermediate biosynthesis; chorismate biosynthesis; chorismate from D-erythrose 4-phosphate and phosphoenolpyruvate: step 4/7. The protein operates within metabolic intermediate biosynthesis; chorismate biosynthesis; chorismate from D-erythrose 4-phosphate and phosphoenolpyruvate: step 5/7. It participates in metabolic intermediate biosynthesis; chorismate biosynthesis; chorismate from D-erythrose 4-phosphate and phosphoenolpyruvate: step 6/7. The AROM polypeptide catalyzes 5 consecutive enzymatic reactions in prechorismate polyaromatic amino acid biosynthesis. This Saccharomyces cerevisiae (strain JAY291) (Baker's yeast) protein is Pentafunctional AROM polypeptide.